The chain runs to 207 residues: Ribosomal RNA small subunit methyltransferase G (207 aa).

S-adenosyl-L-methionine contacts are provided by residues G73, L78, 124-125 (VE), and R139.

Belongs to the methyltransferase superfamily. RNA methyltransferase RsmG family.

The protein localises to the cytoplasm. The enzyme catalyses guanosine(527) in 16S rRNA + S-adenosyl-L-methionine = N(7)-methylguanosine(527) in 16S rRNA + S-adenosyl-L-homocysteine. Specifically methylates the N7 position of guanine in position 527 of 16S rRNA. In Escherichia coli (strain SMS-3-5 / SECEC), this protein is Ribosomal RNA small subunit methyltransferase G.